We begin with the raw amino-acid sequence, 417 residues long: Serine hydroxymethyltransferase (417 aa).

Residues L121 and 125-127 each bind (6S)-5,6,7,8-tetrahydrofolate; that span reads GHL. The residue at position 229 (K229) is an N6-(pyridoxal phosphate)lysine. Residue 355 to 357 participates in (6S)-5,6,7,8-tetrahydrofolate binding; the sequence is SPF.

The protein belongs to the SHMT family. Homodimer. Pyridoxal 5'-phosphate serves as cofactor.

The protein localises to the cytoplasm. It catalyses the reaction (6R)-5,10-methylene-5,6,7,8-tetrahydrofolate + glycine + H2O = (6S)-5,6,7,8-tetrahydrofolate + L-serine. It participates in one-carbon metabolism; tetrahydrofolate interconversion. It functions in the pathway amino-acid biosynthesis; glycine biosynthesis; glycine from L-serine: step 1/1. Functionally, catalyzes the reversible interconversion of serine and glycine with tetrahydrofolate (THF) serving as the one-carbon carrier. This reaction serves as the major source of one-carbon groups required for the biosynthesis of purines, thymidylate, methionine, and other important biomolecules. Also exhibits THF-independent aldolase activity toward beta-hydroxyamino acids, producing glycine and aldehydes, via a retro-aldol mechanism. In Shewanella putrefaciens (strain CN-32 / ATCC BAA-453), this protein is Serine hydroxymethyltransferase.